The chain runs to 367 residues: Alginate lyase (367 aa).

Positions 1 to 24 (MTAFKRIFSPALLVLALYGGAAHA) are cleaved as a signal peptide. Residues 63 to 64 (SK), 136 to 137 (HT), and Y254 each bind substrate.

Belongs to the polysaccharide lyase 5 family.

It is found in the periplasm. The enzyme catalyses Eliminative cleavage of alginate to give oligosaccharides with 4-deoxy-alpha-L-erythro-hex-4-enuronosyl groups at their non-reducing ends and beta-D-mannuronate at their reducing end.. In terms of biological role, catalyzes the depolymerization of alginate by cleaving the beta-1,4 glycosidic bond between two adjacent sugar residues via a beta-elimination mechanism. May serve to degrade mislocalized alginate that is trapped in the periplasmic space. In Pseudomonas putida (strain W619), this protein is Alginate lyase.